Consider the following 94-residue polypeptide: Large ribosomal subunit protein eL36 (94 aa).

The segment covering 1-25 (MKNAYKKVRVRYPVKRPDVKRKQRG) has biased composition (basic residues). The tract at residues 1-30 (MKNAYKKVRVRYPVKRPDVKRKQRGPRAET) is disordered.

It belongs to the eukaryotic ribosomal protein eL36 family. As to quaternary structure, component of the large ribosomal subunit.

The protein resides in the cytoplasm. The polypeptide is Large ribosomal subunit protein eL36 (RPL36) (Encephalitozoon cuniculi (strain GB-M1) (Microsporidian parasite)).